Reading from the N-terminus, the 429-residue chain is Bifunctional protein GlmU (429 aa).

Residues Met1–Lys223 are pyrophosphorylase. UDP-N-acetyl-alpha-D-glucosamine contacts are provided by residues Leu8–Gly11, Lys22, and Gly81–Thr82. Asp102 provides a ligand contact to Mg(2+). UDP-N-acetyl-alpha-D-glucosamine contacts are provided by Gly135, Glu149, Asn164, and Asn221. Asn221 contributes to the Mg(2+) binding site. Residues Phe224 to Gln244 form a linker region. An N-acetyltransferase region spans residues Gly245 to Lys429. 2 residues coordinate UDP-N-acetyl-alpha-D-glucosamine: Arg308 and Lys325. His336 serves as the catalytic Proton acceptor. Positions 339 and 350 each coordinate UDP-N-acetyl-alpha-D-glucosamine. Acetyl-CoA is bound by residues Asn359–Tyr360, Ser378, Ala396, and Arg413.

This sequence in the N-terminal section; belongs to the N-acetylglucosamine-1-phosphate uridyltransferase family. It in the C-terminal section; belongs to the transferase hexapeptide repeat family. In terms of assembly, homotrimer. It depends on Mg(2+) as a cofactor.

It localises to the cytoplasm. It catalyses the reaction alpha-D-glucosamine 1-phosphate + acetyl-CoA = N-acetyl-alpha-D-glucosamine 1-phosphate + CoA + H(+). It carries out the reaction N-acetyl-alpha-D-glucosamine 1-phosphate + UTP + H(+) = UDP-N-acetyl-alpha-D-glucosamine + diphosphate. The protein operates within nucleotide-sugar biosynthesis; UDP-N-acetyl-alpha-D-glucosamine biosynthesis; N-acetyl-alpha-D-glucosamine 1-phosphate from alpha-D-glucosamine 6-phosphate (route II): step 2/2. It participates in nucleotide-sugar biosynthesis; UDP-N-acetyl-alpha-D-glucosamine biosynthesis; UDP-N-acetyl-alpha-D-glucosamine from N-acetyl-alpha-D-glucosamine 1-phosphate: step 1/1. Its pathway is bacterial outer membrane biogenesis; LPS lipid A biosynthesis. Catalyzes the last two sequential reactions in the de novo biosynthetic pathway for UDP-N-acetylglucosamine (UDP-GlcNAc). The C-terminal domain catalyzes the transfer of acetyl group from acetyl coenzyme A to glucosamine-1-phosphate (GlcN-1-P) to produce N-acetylglucosamine-1-phosphate (GlcNAc-1-P), which is converted into UDP-GlcNAc by the transfer of uridine 5-monophosphate (from uridine 5-triphosphate), a reaction catalyzed by the N-terminal domain. In Campylobacter jejuni subsp. jejuni serotype O:2 (strain ATCC 700819 / NCTC 11168), this protein is Bifunctional protein GlmU.